Consider the following 163-residue polypeptide: RxLR effector protein PITG_13625 (163 aa).

Residues 1-23 (MKVSKAIVALAALCMALLAPAAG) form the signal peptide. The short motif at 37–52 (RHLRQESAELATTPEE) is the RxLR-dEER element.

This sequence belongs to the RxLR effector family.

The protein localises to the secreted. The protein resides in the host cell membrane. In terms of biological role, effector that enhances P.infestans colonization of Nicotiana benthamiana leaves. The polypeptide is RxLR effector protein PITG_13625 (Phytophthora infestans (strain T30-4) (Potato late blight agent)).